We begin with the raw amino-acid sequence, 245 residues long: Terpene cyclase esdpB (245 aa).

The next 7 membrane-spanning stretches (helical) occupy residues 19–39 (MVAS…VTTI), 48–68 (SGVT…FAVI), 75–95 (IAAL…YVSV), 112–132 (LPVV…ALSM), 140–160 (LYWG…GLLI), 177–197 (FIAS…WPSA), and 208–228 (WLSG…YHIS).

The protein belongs to the paxB family.

The protein localises to the membrane. It participates in secondary metabolite biosynthesis; terpenoid biosynthesis. Terpene cyclase; part of the cluster that mediates the biosynthesis of shearones, diterpenoid pyrones (DPs) which are structurally diverse meroterpenoids consisting of a diterpene linked by a pyrone, and which may exhibit a range of bioactivities. Within the pathway, esdpB takes part to the biosynthesis of the molecular scaffold by catalyzing the cyclization of the prenyl group initiated by protonation and ring-opening of the epoxide to produce the diterpenoid pyrone scaffold. The molecular scaffold is commonly biosynthesized by a series of enzymes including the non-reducing polyketide synthase (NR-PKS) esdpA that generates an alpha-pyrone; the prenyltransferase esdpC that attaches a geranylgeranyl pyrophosphate (GGPP) produced by the GGPP synthase (GGPPS) esdpD onto the pyrone unit; the FAD-dependent monooxygenase esdpE that converts an olefin on the diterpene unit into an epoxide; and the terpene cyclase esdpB that catalyzes the cyclization reactions to give the molecular backbone shearone A. In the modification steps, esdpF oxidizes the hydroxy group to a ketone at C-3 and esdpG then attaches hydroxy groups at both C-11 and C-12. After that, esdpI hydroxylates at C-20 and esdpH hydroxylates at C-6'. The ether bridge is generated by nucleophilic attack of the hydroxy group at C-20 to the carbonyl carbon at C-3. EsdpH can also functions prior to esdpI. The different combinations of these modification enzymes lead to the production of diverse shearone derivatives, shearone I being the end product of the pathway. The alpha-ketoglutarate-dependent dioxygenase esdpJ seems not to be involved in this pathway. This chain is Terpene cyclase esdpB, found in Penicillium shearii (Eupenicillium shearii).